The sequence spans 444 residues: Type VII secretion system protein EssB (444 aa).

The Cytoplasmic segment spans residues 1–229 (MVKNHDPKNE…RKVGHTVFKW (229 aa)). Residues 230 to 250 (VAIGMTTLSVLLIAFLAFLYF) traverse the membrane as a helical segment. At 251-444 (SVMKHNERIE…EKRQEAERKK (194 aa)) the chain is on the extracellular side. The disordered stretch occupies residues 366–444 (KNNGDLSNDK…EKRQEAERKK (79 aa)). Over residues 372–444 (SNDKRSEETK…EKRQEAERKK (73 aa)) the composition is skewed to basic and acidic residues. The stretch at 387-443 (LQDILDKEKQVKDEKAKSEEEKAKAKDEKLKQQEENEKKQKEQAQKDKEKRQEAERK) forms a coiled coil.

Belongs to the EssB family.

It localises to the cell membrane. In terms of biological role, component of the type VII secretion system (Ess). Required for the secretion of EsxA. The polypeptide is Type VII secretion system protein EssB (Staphylococcus aureus (strain MRSA252)).